A 300-amino-acid polypeptide reads, in one-letter code: Peroxisomal 2,4-dienoyl-CoA reductase [(3E)-enoyl-CoA-producing] (300 aa).

NADP(+) contacts are provided by residues 42 to 47 (GGGSGI), 67 to 71 (RNLEK), and aspartate 93. Residue arginine 67 coordinates substrate. Residues arginine 95, phenylalanine 125, and 133–135 (SFN) each bind substrate. Residues lysine 189 and 215 to 221 (PGPISGT) each bind NADP(+). Arginine 226 is a binding site for substrate. Residues 298–300 (AKL) carry the Microbody targeting signal motif.

It belongs to the short-chain dehydrogenases/reductases (SDR) family. 2,4-dienoyl-CoA reductase subfamily. In terms of assembly, monomer, dimer and oligomer.

It is found in the peroxisome. It carries out the reaction a (2E,4Z)-dienoyl-CoA + NADPH + H(+) = a 4,5-saturated-(3E)-enoyl-CoA + NADP(+). It catalyses the reaction a (2E,4E)-dienoyl-CoA + NADPH + H(+) = a 4,5-saturated-(3E)-enoyl-CoA + NADP(+). The catalysed reaction is (2E,4E)-hexadienoyl-CoA + NADPH + H(+) = (3E)-hexenoyl-CoA + NADP(+). The enzyme catalyses (2E,4E)-decadienoyl-CoA + NADPH + H(+) = (3E)-decenoyl-CoA + NADP(+). It carries out the reaction (2E,4Z,7Z,10Z,13Z,16Z,19Z)-docosaheptaenoyl-CoA + NADPH + H(+) = (3E,7Z,10Z,13Z,16Z,19Z)-docosahexaenoyl-CoA + NADP(+). In terms of biological role, auxiliary enzyme of beta-oxidation. Participates in the degradation of unsaturated fatty enoyl-CoA esters having double bonds in both even- and odd-numbered positions in peroxisome. Catalyzes the NADP-dependent reduction of 2,4-dienoyl-CoA to yield trans-3-enoyl-CoA. This chain is Peroxisomal 2,4-dienoyl-CoA reductase [(3E)-enoyl-CoA-producing] (decr2), found in Danio rerio (Zebrafish).